A 159-amino-acid chain; its full sequence is Ribosomal RNA large subunit methyltransferase H (159 aa).

Positions 76 and 108 each coordinate S-adenosyl-L-methionine.

Belongs to the RNA methyltransferase RlmH family. As to quaternary structure, homodimer.

Its subcellular location is the cytoplasm. It carries out the reaction pseudouridine(1915) in 23S rRNA + S-adenosyl-L-methionine = N(3)-methylpseudouridine(1915) in 23S rRNA + S-adenosyl-L-homocysteine + H(+). Functionally, specifically methylates the pseudouridine at position 1915 (m3Psi1915) in 23S rRNA. This Pediococcus pentosaceus (strain ATCC 25745 / CCUG 21536 / LMG 10740 / 183-1w) protein is Ribosomal RNA large subunit methyltransferase H.